Here is an 882-residue protein sequence, read N- to C-terminus: Translation initiation factor IF-2 (882 aa).

Positions 38-294 (IEDSQASWVK…KSKHKRKKEN (257 aa)) are disordered. Composition is skewed to basic and acidic residues over residues 66–76 (TRDEAVKKHSG), 109–128 (GRRE…ERHS), and 207–219 (PDNK…DAKR). Basic residues predominate over residues 282 to 292 (PGRKSKHKRKK). The 174-residue stretch at 383-556 (ARPPVVTIMG…EMNEIRANPD (174 aa)) folds into the tr-type G domain. Positions 392–399 (GHVDHGKT) are G1. 392 to 399 (GHVDHGKT) is a GTP binding site. The G2 stretch occupies residues 417-421 (GITQH). The interval 438 to 441 (DTPG) is G3. Residues 438–442 (DTPGH) and 492–495 (NKID) each bind GTP. The segment at 492–495 (NKID) is G4. The segment at 528-530 (SAK) is G5.

Belongs to the TRAFAC class translation factor GTPase superfamily. Classic translation factor GTPase family. IF-2 subfamily.

It localises to the cytoplasm. Functionally, one of the essential components for the initiation of protein synthesis. Protects formylmethionyl-tRNA from spontaneous hydrolysis and promotes its binding to the 30S ribosomal subunits. Also involved in the hydrolysis of GTP during the formation of the 70S ribosomal complex. The chain is Translation initiation factor IF-2 from Syntrophomonas wolfei subsp. wolfei (strain DSM 2245B / Goettingen).